The primary structure comprises 175 residues: Alpha-crystallin B chain (175 aa).

At M1 the chain carries N-acetylmethionine. The residue at position 19 (S19) is a Phosphoserine. A glycan (O-linked (GlcNAc) serine) is linked at S41. A phosphoserine mark is found at S45 and S59. The sHSP domain occupies 56 to 164; sequence RAPSWIDTGL…PERTIPITRE (109 aa). H83 provides a ligand contact to Zn(2+). K92 bears the N6-acetyllysine mark. 4 residues coordinate Zn(2+): H104, E106, H111, and H119. Residues 142–175 form a disordered region; that stretch reads VLTVNGPRKQASGPERTIPITREEKPAVTAAPKK. K166 bears the N6-acetyllysine mark. A glycan (O-linked (GlcNAc) threonine) is linked at T170.

It belongs to the small heat shock protein (HSP20) family. As to quaternary structure, heteromer composed of three CRYAA and one CRYAB subunits. Aggregates with homologous proteins, including the small heat shock protein HSPB1, to form large heteromeric complexes. Inter-subunit bridging via zinc ions enhances stability, which is crucial as there is no protein turn over in the lens. Interacts with HSPBAP1 and TTN/titin. Interacts with TMEM109; in the cellular response to DNA damage. Interacts with DES; binds rapidly during early stages of DES filament assembly and a reduced binding seen in the later stages. Interacts with ATP6V1A and with MTOR, forming a ternary complex. As to expression, lens as well as other tissues.

It is found in the cytoplasm. It localises to the nucleus. Its subcellular location is the secreted. The protein resides in the lysosome. Its function is as follows. May contribute to the transparency and refractive index of the lens. Has chaperone-like activity, preventing aggregation of various proteins under a wide range of stress conditions. In lens epithelial cells, stabilizes the ATP6V1A protein, preventing its degradation by the proteasome. The chain is Alpha-crystallin B chain (CRYAB) from Spalax judaei (Judean Mountains blind mole rat).